The chain runs to 921 residues: Isoleucine--tRNA ligase 1 (921 aa).

A 'HIGH' region motif is present at residues 57-67 (PYANGDIHMGH). E552 serves as a coordination point for L-isoleucyl-5'-AMP. The 'KMSKS' region motif lies at 593 to 597 (KMSKS). K596 contributes to the ATP binding site. 4 residues coordinate Zn(2+): C888, C891, C908, and C911.

Belongs to the class-I aminoacyl-tRNA synthetase family. IleS type 1 subfamily. As to quaternary structure, monomer. Zn(2+) is required as a cofactor.

It is found in the cytoplasm. It carries out the reaction tRNA(Ile) + L-isoleucine + ATP = L-isoleucyl-tRNA(Ile) + AMP + diphosphate. Catalyzes the attachment of isoleucine to tRNA(Ile). As IleRS can inadvertently accommodate and process structurally similar amino acids such as valine, to avoid such errors it has two additional distinct tRNA(Ile)-dependent editing activities. One activity is designated as 'pretransfer' editing and involves the hydrolysis of activated Val-AMP. The other activity is designated 'posttransfer' editing and involves deacylation of mischarged Val-tRNA(Ile). This is Isoleucine--tRNA ligase 1 from Bacillus thuringiensis subsp. konkukian (strain 97-27).